Consider the following 148-residue polypeptide: Snaclec 3 (148 aa).

A signal peptide spans 1 to 23; the sequence is MGRFISVSFGLLVVFLSLSGTEA. 3 cysteine pairs are disulfide-bonded: Cys-27-Cys-38, Cys-55-Cys-144, and Cys-121-Cys-136. Residues 34–145 form the C-type lectin domain; it reads YDQNCYKVFT…CSSTHNFVCK (112 aa).

This sequence belongs to the snaclec family. Heterodimer; disulfide-linked.

The protein localises to the secreted. In terms of biological role, interferes with one step of hemostasis (modulation of platelet aggregation, or coagulation cascade, for example). This Daboia siamensis (Eastern Russel's viper) protein is Snaclec 3.